Reading from the N-terminus, the 587-residue chain is Pescadillo homolog (587 aa).

The stretch at 267–306 (LKKKEEKNDEEGKNLSKKELNKAIKADQEQQENDEQDNNN) forms a coiled coil. Residues 290–311 (IKADQEQQENDEQDNNNGESVE) are disordered. Over residues 295 to 311 (EQQENDEQDNNNGESVE) the composition is skewed to acidic residues. The 100-residue stretch at 335–434 (STAELFSKFI…ELINVNEYAA (100 aa)) folds into the BRCT domain. The tract at residues 437 to 587 (TLPPHLSPWG…KKKEQLKKLN (151 aa)) is disordered. Positions 459 to 494 (KEDGEAEEDTDEEEEEVEIEDGDEDQEDEEEEEDED) are enriched in acidic residues. Positions 470–587 (EEEEEVEIED…KKKEQLKKLN (118 aa)) form a coiled coil. 3 stretches are compositionally biased toward basic and acidic residues: residues 529–541 (SNKEADEEKELKK), 559–569 (IEKKENREKQL), and 578–587 (KKKEQLKKLN).

The protein belongs to the pescadillo family. Component of the NOP7 complex, composed of ERB1, NOP7 and YTM1. The complex is held together by ERB1, which interacts with NOP7 via its N-terminal domain and with YTM1 via a high-affinity interaction between the seven-bladed beta-propeller domains of the 2 proteins. The NOP7 complex associates with the 66S pre-ribosome.

Its subcellular location is the nucleus. The protein resides in the nucleolus. It is found in the nucleoplasm. In terms of biological role, component of the NOP7 complex, which is required for maturation of the 25S and 5.8S ribosomal RNAs and formation of the 60S ribosome. Required for the transition from hyphal to yeast growth. This is Pescadillo homolog from Candida albicans (strain SC5314 / ATCC MYA-2876) (Yeast).